Reading from the N-terminus, the 133-residue chain is ATP synthase epsilon chain (133 aa).

The protein belongs to the ATPase epsilon chain family. As to quaternary structure, F-type ATPases have 2 components, CF(1) - the catalytic core - and CF(0) - the membrane proton channel. CF(1) has five subunits: alpha(3), beta(3), gamma(1), delta(1), epsilon(1). CF(0) has three main subunits: a, b and c.

The protein localises to the cell membrane. In terms of biological role, produces ATP from ADP in the presence of a proton gradient across the membrane. The polypeptide is ATP synthase epsilon chain (atpC) (Alkalihalophilus pseudofirmus (strain ATCC BAA-2126 / JCM 17055 / OF4) (Bacillus pseudofirmus)).